The chain runs to 115 residues: Large ribosomal subunit protein bL19 (115 aa).

It belongs to the bacterial ribosomal protein bL19 family.

This protein is located at the 30S-50S ribosomal subunit interface and may play a role in the structure and function of the aminoacyl-tRNA binding site. This Citrobacter koseri (strain ATCC BAA-895 / CDC 4225-83 / SGSC4696) protein is Large ribosomal subunit protein bL19.